We begin with the raw amino-acid sequence, 200 residues long: Glutathione S-transferase 1-1 (200 aa).

Positions G1–D73 constitute a GST N-terminal domain. Glutathione is bound by residues S2, H43 to I45, and E57 to R59. One can recognise a GST C-terminal domain in the interval C79 to F200.

This sequence belongs to the GST superfamily. Theta family. In terms of assembly, homodimer.

It catalyses the reaction RX + glutathione = an S-substituted glutathione + a halide anion + H(+). The enzyme catalyses 1,1,1-trichloro-2,2-bis(4-chlorophenyl)ethane = 1,1-dichloro-2,2-bis(4-chlorophenyl)ethylene + chloride + H(+). Its function is as follows. Conjugation of reduced glutathione to a wide number of exogenous and endogenous hydrophobic electrophiles. Has DDT dehydrochlorinase activity. In Drosophila teissieri (Fruit fly), this protein is Glutathione S-transferase 1-1 (GstD1).